The primary structure comprises 352 residues: Mannonate dehydratase (352 aa).

Belongs to the mannonate dehydratase family. Requires Fe(2+) as cofactor. The cofactor is Mn(2+).

It carries out the reaction D-mannonate = 2-dehydro-3-deoxy-D-gluconate + H2O. The protein operates within carbohydrate metabolism; pentose and glucuronate interconversion. Functionally, catalyzes the dehydration of D-mannonate. The polypeptide is Mannonate dehydratase (Paraburkholderia phytofirmans (strain DSM 17436 / LMG 22146 / PsJN) (Burkholderia phytofirmans)).